The sequence spans 152 residues: UPF0266 membrane protein YobD (152 aa).

3 helical membrane passes run leucine 6–methionine 26, valine 45–histidine 65, and alanine 67–isoleucine 87.

It belongs to the UPF0266 family.

It localises to the cell inner membrane. This chain is UPF0266 membrane protein YobD, found in Salmonella choleraesuis (strain SC-B67).